The sequence spans 423 residues: GPI mannosyltransferase 2 (423 aa).

9 consecutive transmembrane segments (helical) span residues 7–27 (LTLI…ILSG), 102–122 (VILG…LVLY), 128–148 (IFNP…PTAT), 151–171 (APYT…LLSI), 191–211 (TGIF…AHIF), 228–248 (FLSA…TETV), 298–318 (LAMP…SHLV), 333–353 (PPPI…LLLF), and 400–420 (YWIG…AGHY).

This sequence belongs to the PIGV family.

Its subcellular location is the endoplasmic reticulum membrane. Its pathway is glycolipid biosynthesis; glycosylphosphatidylinositol-anchor biosynthesis. In terms of biological role, mannosyltransferase involved in glycosylphosphatidylinositol-anchor biosynthesis. Transfers the second mannose to the glycosylphosphatidylinositol during GPI precursor assembly. The polypeptide is GPI mannosyltransferase 2 (GPI18) (Cryptococcus neoformans var. neoformans serotype D (strain B-3501A) (Filobasidiella neoformans)).